The sequence spans 31 residues: Bacteriocin lactocin-705 (31 aa).

In terms of biological role, antibacterial activity against several lactic acid bacteria, Listeria, Streptococci, etc. The sequence is that of Bacteriocin lactocin-705 from Lacticaseibacillus paracasei (Lactobacillus paracasei).